The primary structure comprises 697 residues: Potassium-transporting ATPase ATP-binding subunit (697 aa).

4 helical membrane passes run 55–75 (PIMFVVEIGFIITFILSFLPS), 79–99 (SIPGWFNITVSLILLFTVLFA), 245–265 (LTLIFLIVVVTLPIFTNYLGF), and 271–291 (VLVALLVCLIPTTIGGLLSAI). Catalysis depends on aspartate 324, which acts as the 4-aspartylphosphate intermediate. ATP is bound by residues aspartate 361, glutamate 365, 393 to 400 (FKAETRMS), and lysine 412. Mg(2+) is bound by residues aspartate 535 and aspartate 539. The next 3 membrane-spanning stretches (helical) occupy residues 605–625 (FAIIPAMFTLAIPQMEALNIM), 633–653 (AILSALIFNAVIIPLLIPLAM), and 677–697 (GGVIVPFIGIKVIDIIVGLFI).

Belongs to the cation transport ATPase (P-type) (TC 3.A.3) family. Type IA subfamily. The system is composed of three essential subunits: KdpA, KdpB and KdpC.

It localises to the cell membrane. It catalyses the reaction K(+)(out) + ATP + H2O = K(+)(in) + ADP + phosphate + H(+). Part of the high-affinity ATP-driven potassium transport (or Kdp) system, which catalyzes the hydrolysis of ATP coupled with the electrogenic transport of potassium into the cytoplasm. This subunit is responsible for energy coupling to the transport system and for the release of the potassium ions to the cytoplasm. This chain is Potassium-transporting ATPase ATP-binding subunit, found in Bacillus cereus (strain G9842).